Here is a 261-residue protein sequence, read N- to C-terminus: Homeobox protein engrailed-2b (261 aa).

3 stretches are compositionally biased toward basic and acidic residues: residues 1 to 21 (MEEN…DESN), 53 to 72 (GRRK…RENR), and 100 to 116 (KKTD…RAET). 3 disordered regions span residues 1–24 (MEEN…NRAI), 53–125 (GRRK…SSDS), and 152–176 (DRPS…KRPR). Positions 172-231 (DKRPRTAFTAEQLQRLKNEFQNNRYLTEQRRQALAQELGLNESQIKIWFQNKRAKIKKAT) form a DNA-binding region, homeobox.

It belongs to the engrailed homeobox family.

It is found in the nucleus. This Danio rerio (Zebrafish) protein is Homeobox protein engrailed-2b (eng2b).